Reading from the N-terminus, the 415-residue chain is Pectin acetylesterase 12 (415 aa).

Residues 1–20 (MVKLLLVGFVVAGIILGTQA) form the signal peptide. Asn-27 carries N-linked (GlcNAc...) asparagine glycosylation. Catalysis depends on charge relay system residues Ser-197, Asp-293, and His-360.

Belongs to the pectinacetylesterase family.

Its subcellular location is the secreted. It is found in the cell wall. In terms of biological role, hydrolyzes acetyl esters in homogalacturonan regions of pectin. In type I primary cell wall, galacturonic acid residues of pectin can be acetylated at the O-2 and O-3 positions. Decreasing the degree of acetylation of pectin gels in vitro alters their physical properties. The sequence is that of Pectin acetylesterase 12 from Arabidopsis thaliana (Mouse-ear cress).